The following is a 330-amino-acid chain: Free fatty acid receptor 2 (330 aa).

The Extracellular segment spans residues 1 to 12 (MLPDWKSSLILM). Residues 13–33 (AYIIIFLTGLPANLLALRAFV) form a helical membrane-spanning segment. The Cytoplasmic segment spans residues 34–41 (GRIRQPQP). Residues 42–62 (APVHILLLSLTLADLLLLLLL) form a helical membrane-spanning segment. Topologically, residues 63–84 (PFKIIEAASNFRWYLPKVVCAL) are extracellular. Residues 85-105 (TSFGFYSSIYCSTWLLAGISI) form a helical membrane-spanning segment. The Cytoplasmic segment spans residues 106–126 (ERYLGVAFPVQYKLSRRPLYG). A helical transmembrane segment spans residues 127–147 (VIAALVAWVMSFGHCTIVIIV). Topologically, residues 148-173 (QYLNTTEQVRSGNEITCYENFTDNQL) are extracellular. N-linked (GlcNAc...) asparagine glycosylation is found at Asn151 and Asn167. A helical membrane pass occupies residues 174 to 194 (DVVLPVRLELCLVLFFIPMAV). Residues 195 to 219 (TIFCYWRFVWIMLSQPLVGAQRRRR) lie on the Cytoplasmic side of the membrane. The chain crosses the membrane as a helical span at residues 220 to 240 (AVGLAVVTLLNFLVCFGPYNV). The Extracellular segment spans residues 241–255 (SHLVGYHQRKSPWWR). A helical membrane pass occupies residues 256–276 (SIAVVFSSLNASLDPLLFYFS). Over 277–330 (SSVVRRAFGRGLQVLRNQGSSLLGRRGKDTAEGTNEDRGVGQGEGMPSSDFTTE) the chain is Cytoplasmic. Residues 299–330 (LGRRGKDTAEGTNEDRGVGQGEGMPSSDFTTE) are disordered. Positions 302 to 315 (RGKDTAEGTNEDRG) are enriched in basic and acidic residues.

Belongs to the G-protein coupled receptor 1 family. As to quaternary structure, interacts with FCN1 (via Fibrinogen C-terminal domain). Expressed at relatively high levels in peripheral blood leukocytes and, to lesser extent, in spleen.

It localises to the cell membrane. Its function is as follows. G protein-coupled receptor that is activated by a major product of dietary fiber digestion, the short chain fatty acids (SCFAs), and that plays a role in the regulation of whole-body energy homeostasis and in intestinal immunity. In omnivorous mammals, the short chain fatty acids acetate, propionate and butyrate are produced primarily by the gut microbiome that metabolizes dietary fibers. SCFAs serve as a source of energy but also act as signaling molecules. That G protein-coupled receptor is probably coupled to the pertussis toxin-sensitive, G(i/o)-alpha family of G proteins but also to the Gq family. Its activation results in the formation of inositol 1,4,5-trisphosphate, the mobilization of intracellular calcium, the phosphorylation of the MAPK3/ERK1 and MAPK1/ERK2 kinases and the inhibition of intracellular cAMP accumulation. May play a role in glucose homeostasis by regulating the secretion of GLP-1, in response to short-chain fatty acids accumulating in the intestine. May also regulate the production of LEP/Leptin, a hormone acting on the central nervous system to inhibit food intake. Finally, may also regulate whole-body energy homeostasis through adipogenesis regulating both differentiation and lipid storage of adipocytes. In parallel to its role in energy homeostasis, may also mediate the activation of the inflammatory and immune responses by SCFA in the intestine, regulating the rapid production of chemokines and cytokines. May also play a role in the resolution of the inflammatory response and control chemotaxis in neutrophils. In addition to SCFAs, may also be activated by the extracellular lectin FCN1 in a process leading to activation of monocytes and inducing the secretion of interleukin-8/IL-8 in response to the presence of microbes. Among SCFAs, the fatty acids containing less than 6 carbons, the most potent activators are probably acetate, propionate and butyrate. Exhibits a SCFA-independent constitutive G protein-coupled receptor activity. This chain is Free fatty acid receptor 2 (FFAR2), found in Homo sapiens (Human).